Consider the following 300-residue polypeptide: Nicotinate-nucleotide pyrophosphorylase [carboxylating] (300 aa).

The tract at residues 5-9 (QLLPK) is important for hexamer formation. Quinolinate contacts are provided by residues arginine 107, 150–151 (RK), 172–173 (HR), lysine 183, glutamate 213, aspartate 234, 260–262 (SGG), and glycine 282.

It belongs to the NadC/ModD family. In terms of assembly, hexamer formed by 3 homodimers.

The catalysed reaction is nicotinate beta-D-ribonucleotide + CO2 + diphosphate = quinolinate + 5-phospho-alpha-D-ribose 1-diphosphate + 2 H(+). Its pathway is cofactor biosynthesis; NAD(+) biosynthesis; nicotinate D-ribonucleotide from quinolinate: step 1/1. Its function is as follows. Involved in the catabolism of quinolinic acid (QA). The sequence is that of Nicotinate-nucleotide pyrophosphorylase [carboxylating] (qprt) from Dictyostelium discoideum (Social amoeba).